A 372-amino-acid chain; its full sequence is Galanin receptor type 2 (372 aa).

At 1–28 the chain is on the extracellular side; the sequence is MNGSGSQGAENTSQEGGSGGWQPEAVLV. Residues N2 and N11 are each glycosylated (N-linked (GlcNAc...) asparagine). A helical membrane pass occupies residues 29 to 49; it reads PLFFALIFLVGTVGNALVLAV. The Cytoplasmic segment spans residues 50–60; it reads LLRGGQAVSTT. A helical transmembrane segment spans residues 61-81; it reads NLFILNLGVADLCFILCCVPF. Over 82–99 the chain is Extracellular; that stretch reads QATIYTLDDWVFGSLLCK. Cysteines 98 and 175 form a disulfide. A helical transmembrane segment spans residues 100–121; the sequence is AVHFLIFLTMHASSFTLAAVSL. Residues 122 to 141 are Cytoplasmic-facing; sequence DRYLAIRYPLHSRELRTPRN. Residues 142–162 form a helical membrane-spanning segment; the sequence is ALAAIGLIWGLALLFSGPYLS. Residues 163–187 are Extracellular-facing; it reads YYRQSQLANLTVCHPAWSAPRRRAM. A helical transmembrane segment spans residues 188 to 208; the sequence is DLCTFVFSYLLPVLVLSLTYA. Over 209–237 the chain is Cytoplasmic; sequence RTLRYLWRTVDPVTAGSGSQRAKRKVTRM. The chain crosses the membrane as a helical span at residues 238-258; that stretch reads IIIVAVLFCLCWMPHHALILC. Topologically, residues 259-260 are extracellular; that stretch reads VW. The chain crosses the membrane as a helical span at residues 261–281; sequence FGRFPLTRATYALRILSHLVS. The Cytoplasmic portion of the chain corresponds to 282 to 372; the sequence is YANSCVNPIV…ASSRTLDPAC (91 aa). Residues 353 to 372 form a disordered region; that stretch reads VPPPALPNCTASSRTLDPAC. Residues 361–372 show a composition bias toward polar residues; that stretch reads CTASSRTLDPAC.

The protein belongs to the G-protein coupled receptor 1 family.

It is found in the cell membrane. In terms of biological role, receptor for the hormone galanin, GALP and spexin-1. The activity of this receptor is mediated by G proteins that activate the phospholipase C/protein kinase C pathway (via G(q)) and that inhibit adenylyl cyclase (via G(i)). The protein is Galanin receptor type 2 (Galr2) of Rattus norvegicus (Rat).